The sequence spans 719 residues: Translation initiation factor IF-2 (719 aa).

Positions 54-67 are enriched in basic and acidic residues; that stretch reads NKEETKPNVDEKPP. Disordered regions lie at residues 54–75 and 97–122; these read NKEE…LTDN and STKN…KRKN. The span at 109–122 shows a compositional bias: basic residues; the sequence is KDKKKKNKKDKRKN. Positions 221-390 constitute a tr-type G domain; sequence HRSPVVTVMG…LLVSEMSELK (170 aa). The segment at 230–237 is G1; it reads GHVDHGKT. 230–237 is a binding site for GTP; sequence GHVDHGKT. Positions 255–259 are G2; it reads GITQH. A G3 region spans residues 276–279; that stretch reads DTPG. GTP-binding positions include 276–280 and 330–333; these read DTPGH and NKMD. Residues 330-333 are G4; it reads NKMD. Positions 366–368 are G5; it reads SAR.

It belongs to the TRAFAC class translation factor GTPase superfamily. Classic translation factor GTPase family. IF-2 subfamily.

The protein localises to the cytoplasm. Its function is as follows. One of the essential components for the initiation of protein synthesis. Protects formylmethionyl-tRNA from spontaneous hydrolysis and promotes its binding to the 30S ribosomal subunits. Also involved in the hydrolysis of GTP during the formation of the 70S ribosomal complex. In Alkaliphilus oremlandii (strain OhILAs) (Clostridium oremlandii (strain OhILAs)), this protein is Translation initiation factor IF-2.